Here is a 203-residue protein sequence, read N- to C-terminus: Lectin (203 aa).

Residues 1 to 20 form the signal peptide; sequence MINILHVIAGLALASVGVDA. The propeptide occupies 21–53; that stretch reads RQVGVGADVLHAVENTIDSITGVEASHSALEVG.

As to quaternary structure, monomer.

Its function is as follows. N-acetyl-D-glucosamine-specific lectin. Specifically agglutinates rabbit erythrocytes. The chain is Lectin (UPL1) from Ulva pertusa (Sea lettuce).